A 317-amino-acid chain; its full sequence is Beta-ketoacyl-[acyl-carrier-protein] synthase III (317 aa).

Catalysis depends on residues cysteine 112 and histidine 244. Residues 245–249 (QANVR) form an ACP-binding region. Asparagine 274 is a catalytic residue.

Belongs to the thiolase-like superfamily. FabH family. Homodimer.

Its subcellular location is the cytoplasm. It catalyses the reaction malonyl-[ACP] + acetyl-CoA + H(+) = 3-oxobutanoyl-[ACP] + CO2 + CoA. It functions in the pathway lipid metabolism; fatty acid biosynthesis. Functionally, catalyzes the condensation reaction of fatty acid synthesis by the addition to an acyl acceptor of two carbons from malonyl-ACP. Catalyzes the first condensation reaction which initiates fatty acid synthesis and may therefore play a role in governing the total rate of fatty acid production. Possesses both acetoacetyl-ACP synthase and acetyl transacylase activities. Its substrate specificity determines the biosynthesis of branched-chain and/or straight-chain of fatty acids. This is Beta-ketoacyl-[acyl-carrier-protein] synthase III from Rickettsia canadensis (strain McKiel).